A 429-amino-acid polypeptide reads, in one-letter code: Ribosomal RNA small subunit methyltransferase B (429 aa).

S-adenosyl-L-methionine is bound by residues 254 to 260 (CAAPGGK), Asp277, Asp303, and Asp322. Catalysis depends on Cys375, which acts as the Nucleophile.

This sequence belongs to the class I-like SAM-binding methyltransferase superfamily. RsmB/NOP family.

It is found in the cytoplasm. The enzyme catalyses cytidine(967) in 16S rRNA + S-adenosyl-L-methionine = 5-methylcytidine(967) in 16S rRNA + S-adenosyl-L-homocysteine + H(+). In terms of biological role, specifically methylates the cytosine at position 967 (m5C967) of 16S rRNA. The chain is Ribosomal RNA small subunit methyltransferase B from Escherichia coli O6:H1 (strain CFT073 / ATCC 700928 / UPEC).